The sequence spans 430 residues: Aspartate aminotransferase, mitochondrial (430 aa).

Residues 1–28 constitute a mitochondrion transit peptide; the sequence is MALAMMIRNAASKRGMTPISGHFGGLRS. Positions 65, 160, and 213 each coordinate L-aspartate. At K277 the chain carries N6-(pyridoxal phosphate)lysine. Residue R405 participates in L-aspartate binding.

This sequence belongs to the class-I pyridoxal-phosphate-dependent aminotransferase family. As to quaternary structure, homodimer. It depends on pyridoxal 5'-phosphate as a cofactor.

Its subcellular location is the mitochondrion matrix. The enzyme catalyses L-aspartate + 2-oxoglutarate = oxaloacetate + L-glutamate. Functionally, amino acid aminotransferase important for the metabolism of amino acids and Krebs-cycle related organic acids. No activity with D-Asp or D-Ala as amino donors. In plants, it is involved in nitrogen metabolism and in aspects of carbon and energy metabolism. The protein is Aspartate aminotransferase, mitochondrial (ASP1) of Arabidopsis thaliana (Mouse-ear cress).